The primary structure comprises 298 residues: Ribosomal protein L11 methyltransferase (298 aa).

The S-adenosyl-L-methionine site is built by T148, G169, D191, and N233.

The protein belongs to the methyltransferase superfamily. PrmA family.

The protein localises to the cytoplasm. It catalyses the reaction L-lysyl-[protein] + 3 S-adenosyl-L-methionine = N(6),N(6),N(6)-trimethyl-L-lysyl-[protein] + 3 S-adenosyl-L-homocysteine + 3 H(+). Functionally, methylates ribosomal protein L11. The chain is Ribosomal protein L11 methyltransferase from Marinobacter nauticus (strain ATCC 700491 / DSM 11845 / VT8) (Marinobacter aquaeolei).